Reading from the N-terminus, the 602-residue chain is Protein SHORT-ROOT 1 (602 aa).

The segment covering 12 to 55 (AASEQQQQQQQSASYNSRSTTSSGSRSSSHQTNASYSYYHHSSN) has biased composition (low complexity). Disordered regions lie at residues 12-69 (AASE…YYYG), 101-145 (DFSS…TAAG), and 165-185 (DFSS…AVGG). Residues 56–68 (SGGGGGGGGGYYY) are compositionally biased toward gly residues. Residues 122 to 145 (PPASSTPTGTAPTPPLSTSSTAAG) are compositionally biased toward low complexity. Residues 173–185 (SGGGTASSGAVGG) are compositionally biased toward gly residues. A GRAS domain is found at 183-601 (VGGGGGGRWA…QPLVWASAWR (419 aa)). Positions 190 to 253 (RWASQLLLEC…LTASGPRTLR (64 aa)) are leucine repeat I (LRI). Positions 272-349 (ALRFQELSPW…PHLSITTVVS (78 aa)) are VHIID. The VHIID motif lies at 311 to 315 (FHILD). The interval 365–401 (EIGQRMEKFARLMGVPFRFRAVHHSGDLAELDLDALD) is leucine repeat II (LRII). The tract at residues 411-517 (LAVNCVNSLR…ERGAGRAIVD (107 aa)) is PFYRE. Positions 520–601 (SCPASESMER…QPLVWASAWR (82 aa)) are SAW.

The protein belongs to the GRAS family. In terms of assembly, interacts with SCR1. Interacts with SMOS1. In terms of tissue distribution, expressed in leaves and roots. Detected in the stele, the endodermis and part of the cortex.

The protein localises to the nucleus. In terms of biological role, transcription factor required for the asymmetric cell division involved in radial pattern formation in roots. Essential for both cell division and cell specification. The protein is Protein SHORT-ROOT 1 of Oryza sativa subsp. japonica (Rice).